A 474-amino-acid polypeptide reads, in one-letter code: Proline--tRNA ligase (474 aa).

This sequence belongs to the class-II aminoacyl-tRNA synthetase family. ProS type 3 subfamily. Homodimer.

The protein resides in the cytoplasm. It carries out the reaction tRNA(Pro) + L-proline + ATP = L-prolyl-tRNA(Pro) + AMP + diphosphate. Catalyzes the attachment of proline to tRNA(Pro) in a two-step reaction: proline is first activated by ATP to form Pro-AMP and then transferred to the acceptor end of tRNA(Pro). This Mycoplasma mycoides subsp. mycoides SC (strain CCUG 32753 / NCTC 10114 / PG1) protein is Proline--tRNA ligase.